The primary structure comprises 288 residues: 4-diphosphocytidyl-2-C-methyl-D-erythritol kinase (288 aa).

Lysine 10 is a catalytic residue. 99–109 contacts ATP; it reads PMGGGLGGGSS. Aspartate 141 is an active-site residue.

The protein belongs to the GHMP kinase family. IspE subfamily. Homodimer.

It carries out the reaction 4-CDP-2-C-methyl-D-erythritol + ATP = 4-CDP-2-C-methyl-D-erythritol 2-phosphate + ADP + H(+). It participates in isoprenoid biosynthesis; isopentenyl diphosphate biosynthesis via DXP pathway; isopentenyl diphosphate from 1-deoxy-D-xylulose 5-phosphate: step 3/6. Functionally, catalyzes the phosphorylation of the position 2 hydroxy group of 4-diphosphocytidyl-2C-methyl-D-erythritol. The polypeptide is 4-diphosphocytidyl-2-C-methyl-D-erythritol kinase (Serratia proteamaculans (strain 568)).